Reading from the N-terminus, the 656-residue chain is PAN2-PAN3 deadenylation complex subunit pan3 (656 aa).

Disordered regions lie at residues 1–24 (MAAT…KNRD) and 75–117 (SFTP…QQAN). Residues 24–53 (DTKETLCRNVVIYGHCRWEDSGCTFNHDQN) form a C3H1-type zinc finger. Residues 63-83 (NSNRRVFNVESPSFTPANQQQ) carry the PABPC-interacting motif-2 (PAM-2) motif. Composition is skewed to polar residues over residues 75-96 (SFTP…SQAA) and 107-117 (GTSTPTLQQAN). The tract at residues 251–514 (QLLPNSGLPN…TVETLLGGIT (264 aa)) is pseudokinase domain. ATP is bound by residues 275 to 280 (TRNSTC), arginine 302, 352 to 359 (DFHPLSET), and 412 to 413 (SK). Residues 515 to 553 (THLANFANFVMQESDEKEFHLMRELENGRIARLMFKLSV) adopt a coiled-coil conformation. The interval 554–656 (VNERGDSCGV…SKPSATGATI (103 aa)) is knob domain.

The protein belongs to the protein kinase superfamily. PAN3 family. As to quaternary structure, homodimer. Forms a heterotrimer with a catalytic subunit par-1/pan2 to form the poly(A)-nuclease (PAN) deadenylation complex. Interacts (via PAM-2 motif) with poly(A)-binding protein pabp-1 (via PABC domain), conferring substrate specificity of the enzyme complex.

Its subcellular location is the cytoplasm. In terms of biological role, regulatory subunit of the poly(A)-nuclease (PAN) deadenylation complex, one of two cytoplasmic mRNA deadenylases involved in mRNA turnover. PAN specifically shortens poly(A) tails of RNA and the activity is stimulated by poly(A)-binding protein pabp-1. PAN deadenylation is followed by rapid degradation of the shortened mRNA tails by the CCR4-NOT complex. Deadenylated mRNAs are then degraded by two alternative mechanisms, namely exosome-mediated 3'-5' exonucleolytic degradation, or deadenylation-dependent mRNA decaping and subsequent 5'-3' exonucleolytic degradation by rgb-30/xrn1. May also be involved in post-transcriptional maturation of mRNA poly(A) tails. par-2/pan3 acts as a positive regulator for PAN activity, recruiting the catalytic subunit par-1/pan2 to mRNA via its interaction with RNA and with pabp-1. The protein is PAN2-PAN3 deadenylation complex subunit pan3 (par-2) of Neurospora crassa (strain ATCC 24698 / 74-OR23-1A / CBS 708.71 / DSM 1257 / FGSC 987).